A 422-amino-acid polypeptide reads, in one-letter code: Gamma-glutamyl phosphate reductase (422 aa).

This sequence belongs to the gamma-glutamyl phosphate reductase family.

It localises to the cytoplasm. The enzyme catalyses L-glutamate 5-semialdehyde + phosphate + NADP(+) = L-glutamyl 5-phosphate + NADPH + H(+). The protein operates within amino-acid biosynthesis; L-proline biosynthesis; L-glutamate 5-semialdehyde from L-glutamate: step 2/2. In terms of biological role, catalyzes the NADPH-dependent reduction of L-glutamate 5-phosphate into L-glutamate 5-semialdehyde and phosphate. The product spontaneously undergoes cyclization to form 1-pyrroline-5-carboxylate. This Nitrosomonas europaea (strain ATCC 19718 / CIP 103999 / KCTC 2705 / NBRC 14298) protein is Gamma-glutamyl phosphate reductase.